We begin with the raw amino-acid sequence, 123 residues long: Protein Wnt-7a (123 aa).

Serine 1 is lipidated: O-palmitoleoyl serine; by PORCN. Positions 33-61 are disordered linker; sequence VEPVRASRNKRPTFLKIKKPLSYLKPMDT. Cysteine 89 and cysteine 104 are joined by a disulfide. A glycan (N-linked (GlcNAc...) asparagine) is linked at asparagine 90.

Belongs to the Wnt family. Palmitoleoylation is required for efficient binding to frizzled receptors. Depalmitoleoylation leads to Wnt signaling pathway inhibition.

It is found in the secreted. The protein resides in the extracellular space. Its subcellular location is the extracellular matrix. Ligand for members of the frizzled family of seven transmembrane receptors that functions in the canonical Wnt/beta-catenin signaling pathway. Plays an important role in embryonic development, including dorsal versus ventral patterning during limb development, skeleton development and urogenital tract development. Required for central nervous system (CNS) angiogenesis and blood-brain barrier regulation. In Plethodon jordani (Red-cheeked salamander), this protein is Protein Wnt-7a (WNT-7A).